Consider the following 292-residue polypeptide: MKDIATPNRTKDIVEKYGFSFKKSLGQNFLIDTNVLNRIVDYAEIGPKGGAIEIGPGIGALTEQLAKRAKKVVAFEIDQRLLPILDETLAPYDNVTIINKDVLKANVHEVFQEQFEEGQDVMVVANLPYYVTTPILFKLLEEKLPVRGFVVMMQKEVGDRLAAKPGTKDYGSLSIAIQYYTEVETVMTVPRTVFVPQPNVDSSVIRLLKRPKPIVEVIDEKFFFEVVRASFAQRRKTLMNNLSNNLNDFPKDKELLERILTEIGIDPKRRGETLSIEEFAMLSNALVPHKMK.

S-adenosyl-L-methionine-binding residues include Asn-28, Leu-30, Gly-55, Glu-76, Asp-101, and Asn-126.

The protein belongs to the class I-like SAM-binding methyltransferase superfamily. rRNA adenine N(6)-methyltransferase family. RsmA subfamily.

The protein localises to the cytoplasm. The enzyme catalyses adenosine(1518)/adenosine(1519) in 16S rRNA + 4 S-adenosyl-L-methionine = N(6)-dimethyladenosine(1518)/N(6)-dimethyladenosine(1519) in 16S rRNA + 4 S-adenosyl-L-homocysteine + 4 H(+). Specifically dimethylates two adjacent adenosines (A1518 and A1519) in the loop of a conserved hairpin near the 3'-end of 16S rRNA in the 30S particle. May play a critical role in biogenesis of 30S subunits. The chain is Ribosomal RNA small subunit methyltransferase A from Bacillus cytotoxicus (strain DSM 22905 / CIP 110041 / 391-98 / NVH 391-98).